An 83-amino-acid polypeptide reads, in one-letter code: Small ribosomal subunit protein eS21 (83 aa).

Met1 is modified (N-acetylmethionine). Position 81 is an N6-acetyllysine (Lys81).

Belongs to the eukaryotic ribosomal protein eS21 family. Component of the 40S small ribosomal subunit.

The protein resides in the cytoplasm. It localises to the cytosol. It is found in the rough endoplasmic reticulum. Functionally, component of the small ribosomal subunit. The ribosome is a large ribonucleoprotein complex responsible for the synthesis of proteins in the cell. The sequence is that of Small ribosomal subunit protein eS21 (Rps21) from Mus musculus (Mouse).